Reading from the N-terminus, the 385-residue chain is Putative ribosomal RNA large subunit methyltransferase MJ1653 (385 aa).

The PUA domain maps to 2-81 (TTKLYVDFGG…LDENYIREKI (80 aa)).

This sequence belongs to the methyltransferase superfamily. RlmI family.

It localises to the cytoplasm. The sequence is that of Putative ribosomal RNA large subunit methyltransferase MJ1653 from Methanocaldococcus jannaschii (strain ATCC 43067 / DSM 2661 / JAL-1 / JCM 10045 / NBRC 100440) (Methanococcus jannaschii).